Consider the following 413-residue polypeptide: Isobutyryl-CoA dehydrogenase, mitochondrial (413 aa).

The N-terminal 20 residues, 1–20 (MAMLRSGYRRFGCLRAALKS), are a transit peptide targeting the mitochondrion. Lys48 is modified (N6-acetyllysine; alternate). At Lys48 the chain carries N6-succinyllysine; alternate. FAD is bound by residues 156–165 (YCLTEPGSGS) and 189–191 (FIS). Ser165 contributes to the substrate binding site. Lys211 is modified (N6-succinyllysine). N6-acetyllysine is present on Lys229. Lys269 carries the N6-succinyllysine modification. Substrate is bound at residue 272–275 (NGGR). FAD is bound by residues Arg300, 310–311 (SQ), and 369–373 (QMHGG). Glu396 acts as the Proton acceptor in catalysis. 398-400 (SNE) lines the FAD pocket. Substrate is bound at residue Arg408.

The protein belongs to the acyl-CoA dehydrogenase family. Homotetramer, formed by a dimer of dimers. Requires FAD as cofactor.

The protein localises to the mitochondrion. The catalysed reaction is 2-methylpropanoyl-CoA + oxidized [electron-transfer flavoprotein] + H(+) = 2-methylpropenoyl-CoA + reduced [electron-transfer flavoprotein]. The enzyme catalyses (2S)-2-methylbutanoyl-CoA + oxidized [electron-transfer flavoprotein] + H(+) = (2E)-2-methylbut-2-enoyl-CoA + reduced [electron-transfer flavoprotein]. It carries out the reaction propanoyl-CoA + oxidized [electron-transfer flavoprotein] + H(+) = acryloyl-CoA + reduced [electron-transfer flavoprotein]. It participates in amino-acid degradation; L-valine degradation. Isobutyryl-CoA dehydrogenase which catalyzes the conversion of 2-methylpropanoyl-CoA to (2E)-2-methylpropenoyl-CoA in the valine catabolic pathway. To a lesser extent, also able to catalyze the oxidation of (2S)-2-methylbutanoyl-CoA. This chain is Isobutyryl-CoA dehydrogenase, mitochondrial, found in Mus musculus (Mouse).